A 1712-amino-acid polypeptide reads, in one-letter code: Neurexin-2 (1712 aa).

A signal peptide spans methionine 1–glycine 28. One can recognise a Laminin G-like 1 domain in the interval leucine 29–cysteine 206. The Extracellular portion of the chain corresponds to leucine 29–threonine 1636. Asparagine 60 carries N-linked (GlcNAc...) asparagine glycosylation. In terms of domain architecture, EGF-like 1 spans alanine 202–serine 242. 3 disulfide bridges follow: cysteine 206–cysteine 219, cysteine 213–cysteine 229, and cysteine 231–cysteine 241. 2 consecutive Laminin G-like domains span residues valine 289–cysteine 486 and aspartate 493–cysteine 686. Aspartate 335 lines the Ca(2+) pocket. N-linked (GlcNAc...) asparagine glycosylation is present at asparagine 338. Ca(2+) contacts are provided by leucine 352 and methionine 420. Disulfide bonds link cysteine 450/cysteine 486, cysteine 657/cysteine 686, cysteine 694/cysteine 705, cysteine 699/cysteine 714, and cysteine 716/cysteine 726. One can recognise an EGF-like 2 domain in the interval threonine 690 to glutamate 727. Laminin G-like domains follow at residues valine 732–cysteine 904 and aspartate 918–cysteine 1093. Ca(2+)-binding residues include aspartate 779 and leucine 796. Asparagine 841 carries an N-linked (GlcNAc...) asparagine glycan. Arginine 854 provides a ligand contact to Ca(2+). 4 disulfide bridges follow: cysteine 1065–cysteine 1093, cysteine 1100–cysteine 1111, cysteine 1105–cysteine 1120, and cysteine 1122–cysteine 1132. The 38-residue stretch at proline 1096–asparagine 1133 folds into the EGF-like 3 domain. The 209-residue stretch at threonine 1137–serine 1345 folds into the Laminin G-like 6 domain. Residues aspartate 1189 and valine 1206 each contribute to the Ca(2+) site. The N-linked (GlcNAc...) asparagine glycan is linked to asparagine 1236. Ca(2+) is bound by residues isoleucine 1288 and asparagine 1290. Residues alanine 1373 to asparagine 1392 form a disordered region. Residue serine 1400 is glycosylated (O-linked (Xyl...) (heparan sulfate) serine). 2 disordered regions span residues alanine 1458–proline 1489 and threonine 1525–valine 1626. The helical transmembrane segment at glycine 1637 to methionine 1657 threads the bilayer. At tyrosine 1658–valine 1712 the chain is on the cytoplasmic side. The segment at asparagine 1679 to valine 1712 is disordered.

It belongs to the neurexin family. As to quaternary structure, the laminin G-like domain 1 binds to NXPH1. Interacts with PATJ. Interacts with CBLN1, CBLN2 and, less avidly, with CBLN4. Specific isoforms bind neuroligins NLGN1, NLGN2 and NLGN3. Specific isoforms bind to alpha-dystroglycan. Interacts (via Laminin G-like 1 domain) with IGSF21 (Ig-like 1 domain) in a trans-interaction manner. Interacts with CLSTN3. O-glycosylated; contains heparan sulfate. Heparan sulfate attachment is required for synapse development by mediating interactions with neuroligins. Predominantly expressed in brain.

It localises to the presynaptic cell membrane. Functionally, neuronal cell surface protein that may be involved in cell recognition and cell adhesion. May mediate intracellular signaling. The chain is Neurexin-2 (NRXN2) from Homo sapiens (Human).